The sequence spans 286 residues: tRNA pseudouridine synthase A (286 aa).

Asp60 functions as the Nucleophile in the catalytic mechanism. Tyr132 contacts substrate.

It belongs to the tRNA pseudouridine synthase TruA family. In terms of assembly, homodimer.

It catalyses the reaction uridine(38/39/40) in tRNA = pseudouridine(38/39/40) in tRNA. In terms of biological role, formation of pseudouridine at positions 38, 39 and 40 in the anticodon stem and loop of transfer RNAs. The polypeptide is tRNA pseudouridine synthase A (Mycobacterium leprae (strain TN)).